The primary structure comprises 164 residues: UPF0304 protein PM1500 (164 aa).

Belongs to the UPF0304 family.

This is UPF0304 protein PM1500 from Pasteurella multocida (strain Pm70).